The chain runs to 199 residues: Chaperone protein TorD (199 aa).

This sequence belongs to the TorD/DmsD family. TorD subfamily.

It is found in the cytoplasm. Functionally, involved in the biogenesis of TorA. Acts on TorA before the insertion of the molybdenum cofactor and, as a result, probably favors a conformation of the apoenzyme that is competent for acquiring the cofactor. The chain is Chaperone protein TorD from Actinobacillus pleuropneumoniae serotype 3 (strain JL03).